Reading from the N-terminus, the 292-residue chain is Ribosomal RNA small subunit methyltransferase A (292 aa).

S-adenosyl-L-methionine-binding residues include asparagine 28, leucine 30, glycine 55, glutamate 76, aspartate 101, and asparagine 126.

This sequence belongs to the class I-like SAM-binding methyltransferase superfamily. rRNA adenine N(6)-methyltransferase family. RsmA subfamily.

It is found in the cytoplasm. It carries out the reaction adenosine(1518)/adenosine(1519) in 16S rRNA + 4 S-adenosyl-L-methionine = N(6)-dimethyladenosine(1518)/N(6)-dimethyladenosine(1519) in 16S rRNA + 4 S-adenosyl-L-homocysteine + 4 H(+). Its function is as follows. Specifically dimethylates two adjacent adenosines (A1518 and A1519) in the loop of a conserved hairpin near the 3'-end of 16S rRNA in the 30S particle. May play a critical role in biogenesis of 30S subunits. This chain is Ribosomal RNA small subunit methyltransferase A, found in Bacillus cereus (strain G9842).